The following is a 257-amino-acid chain: MTNQRFKSTDPVNIEGWSWQPFLEDAIKRLEGLNVEPYPVPDRFLQREDQTGSKSKSIPVTTATWACKTEKFRQVRAACVSAGSAASVLNFVINPKSTYDLPFFGGDLVTLPAGHLLALDLQPAIKTDEVHTTHVWDRLIPIFERWRDQLPYGGPIPEEAQPFFSPGFLWTRLPLGEEGDELIQSIVRPAFNDYLDLYLELAASAERVTDERSEVLLQGQRKYTDYRAEKDPARGMLTRFHGSEWTEAYIHTVLFDL.

Belongs to the HY2 family.

The enzyme catalyses (3Z)-phycoerythrobilin + oxidized 2[4Fe-4S]-[ferredoxin] = 15,16-dihydrobiliverdin + reduced 2[4Fe-4S]-[ferredoxin] + 2 H(+). Functionally, catalyzes the two-electron reduction of the C2 and C3(1) diene system of 15,16-dihydrobiliverdin. The chain is Phycoerythrobilin:ferredoxin oxidoreductase (pebB) from Synechococcus sp. (strain WH8020).